The sequence spans 164 residues: Protein-export protein SecB (164 aa).

The protein belongs to the SecB family. In terms of assembly, homotetramer, a dimer of dimers. One homotetramer interacts with 1 SecA dimer.

The protein resides in the cytoplasm. In terms of biological role, one of the proteins required for the normal export of preproteins out of the cell cytoplasm. It is a molecular chaperone that binds to a subset of precursor proteins, maintaining them in a translocation-competent state. It also specifically binds to its receptor SecA. This Caulobacter sp. (strain K31) protein is Protein-export protein SecB.